A 162-amino-acid polypeptide reads, in one-letter code: Phosphopantetheine adenylyltransferase (162 aa).

Residue T9 participates in substrate binding. Residues T9–F10 and H17 contribute to the ATP site. K41, L73, and R87 together coordinate substrate. Residues G88–R90, E98, and L123–S129 contribute to the ATP site.

Belongs to the bacterial CoaD family. Homohexamer. Mg(2+) is required as a cofactor.

It localises to the cytoplasm. It catalyses the reaction (R)-4'-phosphopantetheine + ATP + H(+) = 3'-dephospho-CoA + diphosphate. It participates in cofactor biosynthesis; coenzyme A biosynthesis; CoA from (R)-pantothenate: step 4/5. Functionally, reversibly transfers an adenylyl group from ATP to 4'-phosphopantetheine, yielding dephospho-CoA (dPCoA) and pyrophosphate. This Teredinibacter turnerae (strain ATCC 39867 / T7901) protein is Phosphopantetheine adenylyltransferase.